Here is a 194-residue protein sequence, read N- to C-terminus: uncharacterized protein (194 aa).

An N-terminal signal peptide occupies residues 1 to 15 (MFVLSIALLSCTTLC). The region spanning 49-134 (CPQGLHADAI…KATYYEKIRC (86 aa)) is the PAN domain. Disulfide bonds link Cys49/Cys134 and Cys79/Cys106.

This is an uncharacterized protein from Caenorhabditis elegans.